The primary structure comprises 208 residues: Fucoxanthin-chlorophyll a-c binding protein, chloroplastic (208 aa).

A chloroplast-targeting transit peptide spans Met1–Glu31. A helical membrane pass occupies residues Ile102–Gly118.

Belongs to the fucoxanthin chlorophyll protein family. In terms of assembly, the LHC complex of chromophytic algae is composed of fucoxanthin, chlorophyll A and C bound non-covalently by fucoxanthin chlorophyll proteins (FCPs). The ratio of pigments in this LHC is; fucoxanthin: chlorophyll C: chlorophyll A; (0.6-1): (0.1-0.3): (1).

The protein resides in the plastid. It localises to the chloroplast thylakoid membrane. Its function is as follows. The light-harvesting complex (LHC) functions as a light receptor, it captures and delivers excitation energy to photosystems with which it is closely associated. Energy is transferred from the carotenoid and chlorophyll C (or B) to chlorophyll A and the photosynthetic reaction centers where it is used to synthesize ATP and reducing power. The protein is Fucoxanthin-chlorophyll a-c binding protein, chloroplastic (FCP) of Isochrysis galbana (Marine planktonic alga).